The chain runs to 209 residues: Imidazoleglycerol-phosphate dehydratase (209 aa).

Belongs to the imidazoleglycerol-phosphate dehydratase family.

The protein localises to the cytoplasm. It catalyses the reaction D-erythro-1-(imidazol-4-yl)glycerol 3-phosphate = 3-(imidazol-4-yl)-2-oxopropyl phosphate + H2O. It participates in amino-acid biosynthesis; L-histidine biosynthesis; L-histidine from 5-phospho-alpha-D-ribose 1-diphosphate: step 6/9. This Microcystis aeruginosa (strain NIES-843 / IAM M-2473) protein is Imidazoleglycerol-phosphate dehydratase.